The chain runs to 313 residues: Ribosomal RNA small subunit methyltransferase H (313 aa).

S-adenosyl-L-methionine contacts are provided by residues Gly-35–His-37, Asp-55, Phe-79, Asp-100, and Gln-107.

This sequence belongs to the methyltransferase superfamily. RsmH family.

The protein resides in the cytoplasm. It catalyses the reaction cytidine(1402) in 16S rRNA + S-adenosyl-L-methionine = N(4)-methylcytidine(1402) in 16S rRNA + S-adenosyl-L-homocysteine + H(+). Its function is as follows. Specifically methylates the N4 position of cytidine in position 1402 (C1402) of 16S rRNA. In Burkholderia mallei (strain NCTC 10247), this protein is Ribosomal RNA small subunit methyltransferase H.